Here is a 116-residue protein sequence, read N- to C-terminus: Large ribosomal subunit protein uL18 (116 aa).

The protein belongs to the universal ribosomal protein uL18 family. In terms of assembly, part of the 50S ribosomal subunit; part of the 5S rRNA/L5/L18/L25 subcomplex. Contacts the 5S and 23S rRNAs.

In terms of biological role, this is one of the proteins that bind and probably mediate the attachment of the 5S RNA into the large ribosomal subunit, where it forms part of the central protuberance. The chain is Large ribosomal subunit protein uL18 from Pseudomonas fluorescens (strain ATCC BAA-477 / NRRL B-23932 / Pf-5).